Consider the following 1356-residue polypeptide: Kinesin-like protein KIF24 (1356 aa).

Positions 1 to 64 (MASWLYECLC…FQLIKIIKIM (64 aa)) constitute an SAM domain. The segment at 93–119 (GPRRQLHFDSPSASKDKMANNETGSLS) is disordered. Phosphoserine is present on Ser102. The Kinesin motor domain occupies 218–541 (KIRVCVRKRP…LRYADRVKEL (324 aa)). 308–315 (GQTGAGKT) contributes to the ATP binding site. Phosphoserine is present on Ser473. Residues 473–702 (SLLALKECIR…PTRGKKVQPV (230 aa)) are interaction with MPHOSPH9. A compositionally biased stretch (polar residues) spans 552–571 (TSQNQTSANASPKRIQSSPV). Disordered stretches follow at residues 552-581 (TSQN…CSPK), 597-664 (PTKV…LCSE), 788-840 (EGRL…STAL), 897-947 (RGAL…HQKP), and 964-998 (VPEQ…DQRD). Ser579 carries the phosphoserine modification. Thr615 bears the Phosphothreonine; by NEK2 mark. The residue at position 616 (Ser616) is a Phosphoserine; by NEK2. A phosphoserine mark is found at Ser640, Ser817, and Ser820. Residues 640–653 (SPRKGTTRSGHSIK) show a composition bias toward basic residues. Residues 810–821 (QAEDLDDSDFSE) are compositionally biased toward acidic residues. Residues 830 to 840 (QPAMKQGSTAL) show a composition bias toward polar residues. The span at 970–979 (GSLSSPSPEN) shows a compositional bias: polar residues. Phosphoserine is present on Ser1008. Residues 1109-1140 (LSSSPPDNRPSGDLPALSPSPIHQHSPDKLPG) are disordered.

It belongs to the TRAFAC class myosin-kinesin ATPase superfamily. Kinesin family. As to quaternary structure, interacts with CCP110, CEP97, TALPID3. Interacts with MPHOSPH9. Expressed in brain, spinal cord, and small intestine.

It localises to the cytoplasm. It is found in the cytoskeleton. Its subcellular location is the microtubule organizing center. The protein resides in the centrosome. The protein localises to the centriole. Its function is as follows. Microtubule-dependent motor protein that acts as a negative regulator of ciliogenesis by mediating recruitment of CCP110 to mother centriole in cycling cells, leading to restrict nucleation of cilia at centrioles. Mediates depolymerization of microtubules of centriolar origin, possibly to suppress aberrant cilia formation. Following activation by NEK2 involved in disassembly of primary cilium during G2/M phase but does not disassemble fully formed ciliary axonemes. As cilium assembly and disassembly is proposed to coexist in a dynamic equilibrium may suppress nascent cilium assembly and, potentially, ciliar re-assembly in cells that have already disassembled their cilia ensuring the completion of cilium removal in the later stages of the cell cycle. Plays an important role in recruiting MPHOSPH9, a negative regulator of cilia formation to the distal end of mother centriole. The protein is Kinesin-like protein KIF24 (Kif24) of Mus musculus (Mouse).